The primary structure comprises 382 residues: D-galactonate dehydratase (382 aa).

D183 provides a ligand contact to Mg(2+). H185 serves as the catalytic Proton donor. 2 residues coordinate Mg(2+): E209 and E235. H285 (proton acceptor) is an active-site residue.

It belongs to the mandelate racemase/muconate lactonizing enzyme family. GalD subfamily. Mg(2+) is required as a cofactor.

It carries out the reaction D-galactonate = 2-dehydro-3-deoxy-D-galactonate + H2O. It functions in the pathway carbohydrate acid metabolism; D-galactonate degradation; D-glyceraldehyde 3-phosphate and pyruvate from D-galactonate: step 1/3. Catalyzes the dehydration of D-galactonate to 2-keto-3-deoxy-D-galactonate. The sequence is that of D-galactonate dehydratase from Salmonella gallinarum (strain 287/91 / NCTC 13346).